The sequence spans 197 residues: MEKYLHLLSRGDKIGLTLIRLSIAIVFMWIGLLKFVPYEADSITPFVANSPLMSFFYEHPEDYKQYLTHEGEYKPEARAWQTANNTYGFSNGLGVVEVIIALLVLANPVNRWLGLLGGLMAFTTPLVTLSFLITTPEAWVPALGDAHHGFPYLSGAGRLVLKDTLMLAGAVMIMADSAREILKQRSNESSSTLKTEY.

Over 1 to 15 (MEKYLHLLSRGDKIG) the chain is Periplasmic. A helical membrane pass occupies residues 16–36 (LTLIRLSIAIVFMWIGLLKFV). Over 37–85 (PYEADSITPFVANSPLMSFFYEHPEDYKQYLTHEGEYKPEARAWQTANN) the chain is Cytoplasmic. Residues 86-106 (TYGFSNGLGVVEVIIALLVLA) traverse the membrane as a helical segment. Residues 107–112 (NPVNRW) lie on the Periplasmic side of the membrane. The chain crosses the membrane as a helical span at residues 113-133 (LGLLGGLMAFTTPLVTLSFLI). Topologically, residues 134 to 197 (TTPEAWVPAL…ESSSTLKTEY (64 aa)) are cytoplasmic.

The protein localises to the cell inner membrane. In terms of biological role, probably involved in reactive chlorine species (RCS) stress resistance. This Escherichia coli (strain K12) protein is Inner membrane protein RclC (rclC).